The chain runs to 721 residues: Ribosomal RNA large subunit methyltransferase K/L (721 aa).

Residues 56-167 (GMYKACLWSR…REVVTVSIDL (112 aa)) form the THUMP domain.

It belongs to the methyltransferase superfamily. RlmKL family.

Its subcellular location is the cytoplasm. The enzyme catalyses guanosine(2445) in 23S rRNA + S-adenosyl-L-methionine = N(2)-methylguanosine(2445) in 23S rRNA + S-adenosyl-L-homocysteine + H(+). It catalyses the reaction guanosine(2069) in 23S rRNA + S-adenosyl-L-methionine = N(2)-methylguanosine(2069) in 23S rRNA + S-adenosyl-L-homocysteine + H(+). Functionally, specifically methylates the guanine in position 2445 (m2G2445) and the guanine in position 2069 (m7G2069) of 23S rRNA. This Marinomonas sp. (strain MWYL1) protein is Ribosomal RNA large subunit methyltransferase K/L.